A 667-amino-acid polypeptide reads, in one-letter code: Coiled-coil domain-containing protein 154 (667 aa).

Coiled-coil stretches lie at residues 76–182 (VVEL…QEAG), 215–302 (RRVD…GQHE), 384–410 (LLREKSRALEASVAQLAGQLKELSGHL), and 457–521 (LRGV…KEDN).

It localises to the early endosome. The protein is Coiled-coil domain-containing protein 154 of Homo sapiens (Human).